The chain runs to 355 residues: MPFLGQDWRSPGQNWVKTADGWKRFLDEKSGSFVSDLSSYCNKEVYNKENLFNSLNYDVAAKKRKKDMLNSKTKTQYFHQEKWIYVHKGSTKERHGYCTLGEAFNRLDFSTAILDSRRFNYVVRLLELIAKSQLTSLSGIAQKNFMNILEKVVLKVLEDQQNIRLIRELLQTLYTSLCTLVQRVGKSVLVGNINMWVYRMETILHWQQQLNNIQITRPAFKGLTFTDLPLCLQLNIMQRLSDGRDLVSLGQAAPDLHVLSEDRLLWKKLCQYHFSERQIRKRLILSDKGQLDWKKMYFKLVRCYPRKEQYGDTLQLCKHCHILSWKGTDHPCTANNPESCSVSLSPQDFINLFKF.

A Nuclear localization signal motif is present at residues 62 to 67 (KKRKKD). Residues 169 to 173 (LLQTL) carry the Nuclear export signal motif. The 49-residue stretch at 223–271 (LTFTDLPLCLQLNIMQRLSDGRDLVSLGQAAPDLHVLSEDRLLWKKLCQ) folds into the F-box domain. Positions 280–295 (RKRLILSDKGQLDWKK) match the Bipartite nuclear localization signal motif.

Part of the SCF (SKP1-CUL1-F-box) E3 ubiquitin-protein ligase complex SCF(FBXO32) formed of CUL1, SKP1, RBX1 and FBXO32. As to expression, specifically expressed in cardiac and skeletal muscle.

Its subcellular location is the cytoplasm. The protein resides in the nucleus. Its pathway is protein modification; protein ubiquitination. In terms of biological role, substrate recognition component of a SCF (SKP1-CUL1-F-box protein) E3 ubiquitin-protein ligase complex which mediates the ubiquitination and subsequent proteasomal degradation of target proteins. Probably recognizes and binds to phosphorylated target proteins during skeletal muscle atrophy. Recognizes TERF1. The protein is F-box only protein 32 (FBXO32) of Homo sapiens (Human).